Here is a 311-residue protein sequence, read N- to C-terminus: Coproporphyrin III ferrochelatase 1 (311 aa).

Fe-coproporphyrin III-binding positions include Y12, R29, 45 to 46, S53, and Y124; that span reads RY. Residues H182 and E263 each contribute to the Fe(2+) site.

This sequence belongs to the ferrochelatase family.

The protein localises to the cytoplasm. The catalysed reaction is Fe-coproporphyrin III + 2 H(+) = coproporphyrin III + Fe(2+). It functions in the pathway porphyrin-containing compound metabolism; protoheme biosynthesis. Functionally, involved in coproporphyrin-dependent heme b biosynthesis. Catalyzes the insertion of ferrous iron into coproporphyrin III to form Fe-coproporphyrin III. The polypeptide is Coproporphyrin III ferrochelatase 1 (Bacillus cereus (strain ATCC 10987 / NRS 248)).